A 136-amino-acid chain; its full sequence is MSIKQMPGRVLISLLLSVTGLLSGCASHNENASLLAKKQAQNISQNLPIKSAGYTLVLAQSSGTTVKMTIISEAGTQTTQTPDAFLTSYQRQMCADPTVKLMITEGINYSITINDTRTGNQYQRKLDRTTCGIVKA.

A signal peptide spans 1-24; it reads MSIKQMPGRVLISLLLSVTGLLSG. Cysteine 25 is lipidated: N-palmitoyl cysteine. A lipid anchor (S-diacylglycerol cysteine) is attached at cysteine 25.

This sequence belongs to the GspS/AspS pilotin family.

It is found in the cell outer membrane. Functionally, involved in a type II secretion system (T2SS, formerly general secretion pathway, GSP) for the export of folded proteins across the outer membrane. In a functional T2SS this subunit helps assemble the outer membrane channel. The chain is Lipoprotein YghG (yghG) from Escherichia coli (strain K12).